A 233-amino-acid chain; its full sequence is MKRIALFFCFIFSFAAHANNIIVNGTRFIYPGNEKEITVQLSNTADRPALATAWLDNGNADATPDTITTPFIITPPISRVDAKSGQTLRIKLGSNAGLAKDKETLWWLNLLEIPPVEASQKNEGQNILQLAIRSRFKFIYRPAGLGNRDAAAEKLALSANGSSLSVSNPTPFYITVSRISRNGGKALNSKTVMFAPQSSQTIALSSAVSKGETLTVNNINDYGADVAVKVTVK.

Residues 1–18 (MKRIALFFCFIFSFAAHA) form the signal peptide.

It belongs to the periplasmic pilus chaperone family.

The protein resides in the periplasm. Functionally, mediates assembly of pili by forming soluble multimeric complexes with pili subunits as an intermediate step in the assembly process. This protein is involved in type 3 pili assembly. This is Chaperone protein MrkB (mrkB) from Klebsiella pneumoniae.